Consider the following 1376-residue polypeptide: Zinc finger MYM-type protein 2 (1376 aa).

Positions 30–53 are enriched in polar residues; sequence NVGNSFSGPPNPLVSRSSKFQNSS. 2 disordered regions span residues 30–56 and 85–158; these read NVGN…SVED and TSSK…FSSS. Residues K48, K88, K98, and K104 each participate in a glycyl lysine isopeptide (Lys-Gly) (interchain with G-Cter in SUMO2) cross-link. Positions 127–138 are enriched in polar residues; the sequence is TNQGQEKSSSNF. Over residues 139 to 152 the composition is skewed to basic and acidic residues; that stretch reads IERRPSETKNRTND. Glycyl lysine isopeptide (Lys-Gly) (interchain with G-Cter in SUMO2) cross-links involve residues K147, K253, and K297. The disordered stretch occupies residues 269–304; sequence DVFQNGESAPHHNPDSWISQSASFPRNQKQQGVDSL. The segment covering 284–302 has biased composition (polar residues); it reads SWISQSASFPRNQKQQGVD. At S305 the chain carries Phosphoserine. Residues K312, K324, K347, and K365 each participate in a glycyl lysine isopeptide (Lys-Gly) (interchain with G-Cter in SUMO2) cross-link. The MYM-type 1 zinc finger occupies 326–362; that stretch reads VKVTCANCKKPLQKGQTAYQRKGSAHLFCSTTCLSSF. The segment at 368-408 adopts an MYM-type 2 zinc-finger fold; that stretch reads PKKLCVMCKKDITTMKGTIVAQVDSSESFQEFCSTSCLSLY. Residues K416, K440, K490, K502, K512, K528, and K531 each participate in a glycyl lysine isopeptide (Lys-Gly) (interchain with G-Cter in SUMO2) cross-link. 2 consecutive MYM-type zinc fingers follow at residues 420 to 455 and 462 to 501; these read NKSR…FNRY and IMNC…VTEY. The segment at 532–569 adopts an MYM-type 5 zinc-finger fold; that stretch reads LTTCTGCRTQCRFFDMTQCIGPNGYMEPYCSTACMNSH. Glycyl lysine isopeptide (Lys-Gly) (interchain with G-Cter in SUMO2) cross-links involve residues K575, K602, K648, K657, K687, K699, and K708. The MYM-type 6 zinc-finger motif lies at 635-670; the sequence is QLKCNYCKNSFCSKPEILEWENKVHQFCSKTCSDDY. MYM-type zinc fingers lie at residues 722 to 757 and 763 to 798; these read RCVT…CKKF and KAAR…LLRF. Glycyl lysine isopeptide (Lys-Gly) (interchain with G-Cter in SUMO2) cross-links involve residues K763, K787, K811, and K828. At S837 the chain carries Phosphoserine. A disordered region spans residues 1027 to 1063; it reads VFGEEYEEQPRPRSKKKGTKRKAVSGYQSHDDSSDNS. Basic residues predominate over residues 1038–1049; sequence PRSKKKGTKRKA. Phosphoserine is present on S1063. T1375 is subject to Phosphothreonine.

Can form homodimers. May be a component of a BHC histone deacetylase complex that contains HDAC1, HDAC2, HMG20B/BRAF35, KDM1A, RCOR1/CoREST, PHF21A/BHC80, ZMYM2, ZNF217, ZMYM3, GSE1 and GTF2I. Interacts with FOXP1 and FOXP2. In terms of tissue distribution, low but widespread expression is detected in the developing kidney.

Its subcellular location is the nucleus. Functionally, involved in the negative regulation of transcription. The protein is Zinc finger MYM-type protein 2 (Zmym2) of Mus musculus (Mouse).